A 106-amino-acid polypeptide reads, in one-letter code: UPF0145 protein APL_0465 (106 aa).

The protein belongs to the UPF0145 family.

The sequence is that of UPF0145 protein APL_0465 from Actinobacillus pleuropneumoniae serotype 5b (strain L20).